The primary structure comprises 174 residues: ATP-dependent protease subunit HslV (174 aa).

Thr-2 is an active-site residue. Residues Gly-157, Cys-160, and Thr-163 each contribute to the Na(+) site.

This sequence belongs to the peptidase T1B family. HslV subfamily. In terms of assembly, a double ring-shaped homohexamer of HslV is capped on each side by a ring-shaped HslU homohexamer. The assembly of the HslU/HslV complex is dependent on binding of ATP.

Its subcellular location is the cytoplasm. The enzyme catalyses ATP-dependent cleavage of peptide bonds with broad specificity.. Allosterically activated by HslU binding. Functionally, protease subunit of a proteasome-like degradation complex believed to be a general protein degrading machinery. The chain is ATP-dependent protease subunit HslV from Shewanella oneidensis (strain ATCC 700550 / JCM 31522 / CIP 106686 / LMG 19005 / NCIMB 14063 / MR-1).